A 409-amino-acid chain; its full sequence is Phospho-N-acetylmuramoyl-pentapeptide-transferase (409 aa).

10 consecutive transmembrane segments (helical) span residues 23-43 (YITF…TIFG), 73-93 (TPTM…LLLA), 95-115 (LNNI…AIGF), 132-152 (GIFK…TLYF), 214-234 (YAWL…SNGA), 247-267 (TSAI…NVIF), 279-299 (SGEM…FLWY), 305-325 (AVFM…VLAI), 331-351 (MLIP…VLQV), and 386-406 (KIVT…IVTL).

The protein belongs to the glycosyltransferase 4 family. MraY subfamily. It depends on Mg(2+) as a cofactor.

The protein localises to the cell inner membrane. It carries out the reaction UDP-N-acetyl-alpha-D-muramoyl-L-alanyl-gamma-D-glutamyl-meso-2,6-diaminopimeloyl-D-alanyl-D-alanine + di-trans,octa-cis-undecaprenyl phosphate = di-trans,octa-cis-undecaprenyl diphospho-N-acetyl-alpha-D-muramoyl-L-alanyl-D-glutamyl-meso-2,6-diaminopimeloyl-D-alanyl-D-alanine + UMP. Its pathway is cell wall biogenesis; peptidoglycan biosynthesis. Catalyzes the initial step of the lipid cycle reactions in the biosynthesis of the cell wall peptidoglycan: transfers peptidoglycan precursor phospho-MurNAc-pentapeptide from UDP-MurNAc-pentapeptide onto the lipid carrier undecaprenyl phosphate, yielding undecaprenyl-pyrophosphoryl-MurNAc-pentapeptide, known as lipid I. This is Phospho-N-acetylmuramoyl-pentapeptide-transferase from Flavobacterium psychrophilum (strain ATCC 49511 / DSM 21280 / CIP 103535 / JIP02/86).